A 173-amino-acid chain; its full sequence is Alpha-crystallin A chain (173 aa).

Position 1 is an N-acetylmethionine (M1). Positions 1–63 are required for complex formation with BFSP1 and BFSP2; it reads MDIAIQHPWF…RTVLDSGISE (63 aa). Position 6 is a deamidated glutamine; partial (Q6). Phosphoserine is present on S45. Deamidated glutamine; partial is present on Q50. One can recognise a sHSP domain in the interval 52–162; it reads LFRTVLDSGI…GHSERAIPVS (111 aa). K70 carries the post-translational modification N6-acetyllysine. Q90 bears the Deamidated glutamine; partial mark. At K99 the chain carries N6-acetyllysine. H100 contributes to the Zn(2+) binding site. N101 carries the deamidated asparagine; partial modification. Residues E102 and H107 each contribute to the Zn(2+) site. Position 122 is a phosphoserine (S122). The residue at position 123 (N123) is a Deamidated asparagine; partial. A disordered region spans residues 144-173; the sequence is PKVPSGLDAGHSERAIPVSREEKPSSAPSS. Basic and acidic residues predominate over residues 153 to 167; that stretch reads GHSERAIPVSREEKP. H154 provides a ligand contact to Zn(2+). O-linked (GlcNAc) serine glycosylation occurs at S162.

The protein belongs to the small heat shock protein (HSP20) family. As to quaternary structure, heteromer composed of three CRYAA and one CRYAB subunits. Inter-subunit bridging via zinc ions enhances stability, which is crucial as there is no protein turn over in the lens. Can also form homodimers and homotetramers (dimers of dimers) which serve as the building blocks of homooligomers. Within homooligomers, the zinc-binding motif is created from residues of 3 different molecules. His-100 and Glu-102 from one molecule are ligands of the zinc ion, and His-107 and His-154 residues from additional molecules complete the site with tetrahedral coordination geometry. Part of a complex required for lens intermediate filament formation composed of BFSP1, BFSP2 and CRYAA. In terms of processing, acetylation at Lys-70 may increase chaperone activity. Undergoes age-dependent proteolytical cleavage at the C-terminus.

Its subcellular location is the cytoplasm. It is found in the nucleus. Contributes to the transparency and refractive index of the lens. Acts as a chaperone, preventing aggregation of various proteins under a wide range of stress conditions. Required for the correct formation of lens intermediate filaments as part of a complex composed of BFSP1, BFSP2 and CRYAA. The protein is Alpha-crystallin A chain (CRYAA) of Tapirus indicus (Asiatic tapir).